The sequence spans 308 residues: Folate transporter 1, chloroplastic (308 aa).

3 Solcar repeats span residues 4-94 (SWQW…AKQR), 104-192 (LSPA…LRKI), and 213-299 (ADYA…VLKL). 6 helical membrane-spanning segments follow: residues 10 to 30 (ATAG…LDVV), 74 to 91 (VIGS…YGRA), 110 to 130 (LASA…IWLV), 164 to 184 (ALYK…IQFT), 216 to 236 (AALG…FQVI), and 274 to 293 (GLTA…FIVY).

This sequence belongs to the mitochondrial carrier (TC 2.A.29) family. Ubiquitous.

It localises to the plastid. The protein localises to the chloroplast membrane. In terms of biological role, mediates folate import into chloroplast. The protein is Folate transporter 1, chloroplastic (FOLT1) of Arabidopsis thaliana (Mouse-ear cress).